Consider the following 1036-residue polypeptide: Mitogen-activated protein kinase kinase kinase 21 (1036 aa).

Residues 1-36 form a disordered region; the sequence is MALRGAAGATDTPVSSAGGAPGGSASSSSTSSGGSA. A compositionally biased stretch (low complexity) spans 15–36; that stretch reads SSAGGAPGGSASSSSTSSGGSA. The SH3 domain maps to 38–102; sequence AGAGLWAALY…PANYVAPCRP (65 aa). Residues 124-401 enclose the Protein kinase domain; the sequence is LELKELIGAG…ALILEQLTAI (278 aa). ATP-binding positions include 130 to 138 and lysine 151; that span reads IGAGGFGQV. The active-site Proton acceptor is aspartate 263. Residue threonine 299 is modified to Phosphothreonine; by autocatalysis. Serine 303 carries the phosphoserine; by autocatalysis and MAP4K1 modification. Leucine-zipper regions lie at residues 425 to 446 and 460 to 481; these read IQQM…EEEL and LKRR…ELNI. The disordered stretch occupies residues 517–551; it reads SDFQHKITVQASPNLDKRRSLNSSSSSPPSSPTMM. 3 positions are modified to phosphoserine: serine 528, serine 543, and serine 547. Residue threonine 592 is modified to Phosphothreonine. Residue serine 614 is modified to Phosphoserine. Positions 748–763 are enriched in basic and acidic residues; that stretch reads AEEPLPKEEKKKREGI. Disordered stretches follow at residues 748 to 791 and 923 to 954; these read AEEP…SSPP and PHSH…RSRS.

The protein belongs to the protein kinase superfamily. STE Ser/Thr protein kinase family. MAP kinase kinase kinase subfamily. In terms of assembly, homodimer. Interacts with TLR4. Mg(2+) serves as cofactor. Autophosphorylation on serine and threonine residues within the activation loop plays a role in enzyme activation.

The enzyme catalyses L-seryl-[protein] + ATP = O-phospho-L-seryl-[protein] + ADP + H(+). It catalyses the reaction L-threonyl-[protein] + ATP = O-phospho-L-threonyl-[protein] + ADP + H(+). With respect to regulation, homodimerization via the leucine zipper domains is required for autophosphorylation and subsequent activation. Its function is as follows. Negative regulator of TLR4 signaling. Does not activate JNK1/MAPK8 pathway, p38/MAPK14, nor ERK2/MAPK1 pathways. The chain is Mitogen-activated protein kinase kinase kinase 21 from Homo sapiens (Human).